A 312-amino-acid chain; its full sequence is MTEPKKVVEIKNLDLTFNKGKKGANKAINNVSLDIYEGETFGLVGESGSGKTTIGRAILKLYDNFITGGEILFEGKDVRNLKGSELREYRSEAQMIFQDPQASLNGRMRVKDIVAEGLDANGLVKTKAERDARVLELLRLVGLNDDHLTRYPHEFSGGQRQRIGIARALAVKPKFVVADEPISALDVSIQAQVVNLMRDIQAKENLTYLFIAHDLSMVKYISDRIGVMHWGKILEVGTSEQVYNHPIHPYTKSLLSSIPSPDPISERQRTPIVYDPTAELDGQEREMREITPGHFVFSTEAEAEVYKKNATL.

One can recognise an ABC transporter domain in the interval 10–255 (IKNLDLTFNK…PIHPYTKSLL (246 aa)). Residue 45 to 52 (GESGSGKT) coordinates ATP.

It belongs to the ABC transporter superfamily. In terms of assembly, the complex is composed of two ATP-binding proteins (DppD and DppF), two transmembrane proteins (DppB and DppC) and a solute-binding protein (DppA).

The protein resides in the cell membrane. The enzyme catalyses a dipeptide(out) + ATP + H2O = a dipeptide(in) + ADP + phosphate + H(+). Functionally, part of the ABC transporter DppABCDF involved in dipeptide transport. Responsible for energy coupling to the transport system. This chain is Dipeptide transport ATP-binding protein DppF, found in Lactococcus lactis subsp. cremoris (strain MG1363).